The following is a 655-amino-acid chain: Large subunit GTPase 1 homolog (655 aa).

The tract at residues Met-1–Asp-31 is disordered. A compositionally biased stretch (basic residues) spans Leu-16–Arg-28. 2 positions are modified to phosphoserine: Ser-93 and Ser-97. Residues Trp-164 to Pro-441 form the CP-type G domain. A GTP-binding site is contributed by Asn-212 to Asp-215. At Ser-252 the chain carries Phosphoserine. Residues Lys-253–His-359 form a disordered region. Positions Glu-288–Gly-327 are enriched in acidic residues. Positions Gly-328–Glu-339 are enriched in basic and acidic residues. A compositionally biased stretch (polar residues) spans Gln-344–His-359. Residues Gly-390–Ser-397 and Asp-434–Gly-437 contribute to the GTP site. The interval Ser-625–Val-655 is disordered. Over residues Pro-633 to Val-655 the composition is skewed to basic residues.

The protein belongs to the TRAFAC class YlqF/YawG GTPase family. LSG1 subfamily.

Its subcellular location is the cytoplasm. The protein resides in the endoplasmic reticulum. It localises to the nucleus. The protein localises to the cajal body. The catalysed reaction is GTP + H2O = GDP + phosphate + H(+). In terms of biological role, functions as a GTPase. May act by mediating the release of NMD3 from the 60S ribosomal subunit after export into the cytoplasm during the 60S ribosomal subunit maturation. The polypeptide is Large subunit GTPase 1 homolog (Rattus norvegicus (Rat)).